The sequence spans 73 residues: Translation initiation factor IF-1 (73 aa).

Residues 1-73 (MSEKEAGIEV…TRGRITYRDK (73 aa)) form the S1-like domain.

It belongs to the IF-1 family. Component of the 30S ribosomal translation pre-initiation complex which assembles on the 30S ribosome in the order IF-2 and IF-3, IF-1 and N-formylmethionyl-tRNA(fMet); mRNA recruitment can occur at any time during PIC assembly.

Its subcellular location is the cytoplasm. One of the essential components for the initiation of protein synthesis. Stabilizes the binding of IF-2 and IF-3 on the 30S subunit to which N-formylmethionyl-tRNA(fMet) subsequently binds. Helps modulate mRNA selection, yielding the 30S pre-initiation complex (PIC). Upon addition of the 50S ribosomal subunit IF-1, IF-2 and IF-3 are released leaving the mature 70S translation initiation complex. The protein is Translation initiation factor IF-1 of Anaeromyxobacter sp. (strain Fw109-5).